Here is an 82-residue protein sequence, read N- to C-terminus: Small ribosomal subunit protein bS16 (82 aa).

This sequence belongs to the bacterial ribosomal protein bS16 family.

This Aeromonas salmonicida (strain A449) protein is Small ribosomal subunit protein bS16.